A 128-amino-acid chain; its full sequence is Type III secretion protein HrcQb (128 aa).

Positions 1–21 are enriched in acidic residues; it reads MSTEDLYQEDVEMLDDYEDPS. The segment at 1–57 is disordered; the sequence is MSTEDLYQEDVEMLDDYEDPSTEQHWSEEDGEPSGYATAEPDDHAAQEEQDEPPALD. Residues 50–128 are hrcQb-C; it reads QDEPPALDSL…LQITRLVTRS (79 aa). The interval 78–81 is dimer-dimer interface; it reads RRLD.

The protein belongs to the FliN/MopA/SpaO family. Homotetramer. The four monomers assemble into two tightly bound homodimers. Interacts with HrcQa.

It localises to the cytoplasm. Component of the type III secretion system, which is required for effector protein delivery, parasitism, and pathogenicity. Probably participates in the formation of a C-ring-like assembly along with HrcQa. This chain is Type III secretion protein HrcQb (hrcQb), found in Pseudomonas savastanoi pv. phaseolicola (Pseudomonas syringae pv. phaseolicola).